Consider the following 347-residue polypeptide: ATP-dependent kinase YFH7 (347 aa).

33–41 (GPPGSGKST) contributes to the ATP binding site.

It belongs to the YFH7 family.

In terms of biological role, ATP-dependent kinase that could be involved in endoplasmic reticulum membrane assembly. The chain is ATP-dependent kinase YFH7 (YFH7) from Lachancea thermotolerans (strain ATCC 56472 / CBS 6340 / NRRL Y-8284) (Yeast).